We begin with the raw amino-acid sequence, 99 residues long: Acylphosphatase-2 (99 aa).

Residue Ser-2 is modified to N-acetylserine. The region spanning 9-99 is the Acylphosphatase-like domain; that stretch reads SVDYEVFGRV…LEYSNFSIRY (91 aa). Active-site residues include Arg-24 and Asn-42. At Ser-93 the chain carries Phosphoserine.

It belongs to the acylphosphatase family.

The catalysed reaction is an acyl phosphate + H2O = a carboxylate + phosphate + H(+). Its physiological role is not yet clear. This Homo sapiens (Human) protein is Acylphosphatase-2 (ACYP2).